The sequence spans 267 residues: Large ribosomal subunit protein uL4 (267 aa).

The protein belongs to the universal ribosomal protein uL4 family. In terms of assembly, part of the 50S ribosomal subunit.

Functionally, one of the primary rRNA binding proteins, this protein initially binds near the 5'-end of the 23S rRNA. It is important during the early stages of 50S assembly. It makes multiple contacts with different domains of the 23S rRNA in the assembled 50S subunit and ribosome. Its function is as follows. Forms part of the polypeptide exit tunnel. The protein is Large ribosomal subunit protein uL4 of Saccharolobus islandicus (strain M.16.27) (Sulfolobus islandicus).